The primary structure comprises 901 residues: Protein translocase subunit SecA (901 aa).

ATP is bound by residues Gln-85, 103 to 107 (GEGKT), and Asp-492. Residues 828–901 (GLVTDDGGNP…PKNRRNKKRR (74 aa)) form a disordered region. A compositionally biased stretch (basic and acidic residues) spans 871–881 (DGQKPRGEGNR). A compositionally biased stretch (basic residues) spans 882–901 (AARRSAASKKPKNRRNKKRR).

The protein belongs to the SecA family. In terms of assembly, monomer and homodimer. Part of the essential Sec protein translocation apparatus which comprises SecA, SecYEG and auxiliary proteins SecDF. Other proteins may also be involved.

Its subcellular location is the cell membrane. The protein localises to the cytoplasm. It catalyses the reaction ATP + H2O + cellular proteinSide 1 = ADP + phosphate + cellular proteinSide 2.. Part of the Sec protein translocase complex. Interacts with the SecYEG preprotein conducting channel. Has a central role in coupling the hydrolysis of ATP to the transfer of proteins into and across the cell membrane, serving as an ATP-driven molecular motor driving the stepwise translocation of polypeptide chains across the membrane. In Cutibacterium acnes (strain DSM 16379 / KPA171202) (Propionibacterium acnes), this protein is Protein translocase subunit SecA.